Consider the following 103-residue polypeptide: MAAISINVSTVKPLGDRIFVKVSPAEEKTAGGILLPDNAQEKPQIGEVVAVGPGKRNDDGSRSELDVKVGDKVLYSKYAGTDVKLSGEDYVLLSEKDILASVA.

The protein belongs to the GroES chaperonin family. Heptamer of 7 subunits arranged in a ring. Interacts with the chaperonin GroEL.

It is found in the cytoplasm. Functionally, together with the chaperonin GroEL, plays an essential role in assisting protein folding. The GroEL-GroES system forms a nano-cage that allows encapsulation of the non-native substrate proteins and provides a physical environment optimized to promote and accelerate protein folding. GroES binds to the apical surface of the GroEL ring, thereby capping the opening of the GroEL channel. In Crocosphaera subtropica (strain ATCC 51142 / BH68) (Cyanothece sp. (strain ATCC 51142)), this protein is Co-chaperonin GroES.